We begin with the raw amino-acid sequence, 87 residues long: Defensin alpha-like protein 1 (87 aa).

The signal sequence occupies residues 1–19; that stretch reads MKTLILLSALVLLALQVQA. The propeptide occupies 20–56; sequence DPIQEAEEETKTEEQPADEDQDVSVSFEGPEASAVQD. Residues 23 to 41 are compositionally biased toward acidic residues; sequence QEAEEETKTEEQPADEDQD. The interval 23–43 is disordered; sequence QEAEEETKTEEQPADEDQDVS.

Belongs to the alpha-defensin family. As to quaternary structure, antiparallel homodimer; disulfide-linked. Specifically expressed in small intestine (jejunum and ileum). Probably expressed by Paneth cells at the base of intestinal crypts. Coexpressed with MMP7 in small intestine.

Its subcellular location is the secreted. Intestinal defense peptide. Has potent antibacterial activity against Gram-negative bacteria E.coli O157:H7, S.typhimurium DT104, and K.pneumoniae; and against Gram-positive bacteria S.aureus, methicillin-resistant S.aureus and L.monocytogenes. Remains active in the presence of NaCl and Mg(2+). Probably functions by disrupting bacterial membrane integrity. However, does not show cytotoxic activity towards human intestinal cells. This Rattus norvegicus (Rat) protein is Defensin alpha-like protein 1.